The following is a 312-amino-acid chain: Probable deoxyhypusine synthase (312 aa).

K285 functions as the Nucleophile in the catalytic mechanism.

Belongs to the deoxyhypusine synthase family. The cofactor is NAD(+).

It carries out the reaction [eIF5A protein]-L-lysine + spermidine = [eIF5A protein]-deoxyhypusine + propane-1,3-diamine. It functions in the pathway protein modification; eIF5A hypusination. In terms of biological role, catalyzes the NAD-dependent oxidative cleavage of spermidine and the subsequent transfer of the butylamine moiety of spermidine to the epsilon-amino group of a specific lysine residue of the eIF-5A precursor protein to form the intermediate deoxyhypusine residue. The chain is Probable deoxyhypusine synthase (dys) from Saccharolobus solfataricus (strain ATCC 35092 / DSM 1617 / JCM 11322 / P2) (Sulfolobus solfataricus).